The primary structure comprises 815 residues: Protein SMAX1-LIKE 3 (815 aa).

The region spanning 8–171 (VEQALTADAA…TKVEQAVSLE (164 aa)) is the Clp R domain. Repeat stretches follow at residues 12–80 (LTAD…LNRL) and 99–171 (ISNA…VSLE). The interval 750–769 (SRACSPPSNQKSDGSDQPED) is disordered. An EAR motif is present at residues 778–782 (LDLNL).

It belongs to the ClpA/ClpB family. Interacts probably with TPL/TPR in an EAR-motif dependent manner. As to expression, expressed in roots and seedlings.

May function in a transcriptional corepressor complex. The protein is Protein SMAX1-LIKE 3 of Arabidopsis thaliana (Mouse-ear cress).